The following is a 525-amino-acid chain: Probable protein kinase UbiB (525 aa).

A Protein kinase domain is found at 118–500 (DFERVPVASA…QKRTNRLLQG (383 aa)). ATP-binding positions include 124–132 (VASASIAQV) and Lys150. Asp285 serves as the catalytic Proton acceptor. A helical transmembrane segment spans residues 501-521 (LLLFGVAVGVGAVLARAFLAL).

Belongs to the ABC1 family. UbiB subfamily.

It localises to the cell inner membrane. It participates in cofactor biosynthesis; ubiquinone biosynthesis [regulation]. Its function is as follows. Is probably a protein kinase regulator of UbiI activity which is involved in aerobic coenzyme Q (ubiquinone) biosynthesis. The polypeptide is Probable protein kinase UbiB (Paraburkholderia phytofirmans (strain DSM 17436 / LMG 22146 / PsJN) (Burkholderia phytofirmans)).